Here is a 381-residue protein sequence, read N- to C-terminus: tRNA-specific 2-thiouridylase MnmA (381 aa).

ATP-binding positions include 26–33 (AMSGGVDS) and Leu52. Cys120 acts as the Nucleophile in catalysis. Cys120 and Cys217 are joined by a disulfide. Residue Gly144 coordinates ATP. Positions 166–168 (RDQ) are interaction with tRNA. The Cysteine persulfide intermediate role is filled by Cys217.

This sequence belongs to the MnmA/TRMU family.

The protein resides in the cytoplasm. It catalyses the reaction S-sulfanyl-L-cysteinyl-[protein] + uridine(34) in tRNA + AH2 + ATP = 2-thiouridine(34) in tRNA + L-cysteinyl-[protein] + A + AMP + diphosphate + H(+). Catalyzes the 2-thiolation of uridine at the wobble position (U34) of tRNA, leading to the formation of s(2)U34. The chain is tRNA-specific 2-thiouridylase MnmA from Ruegeria sp. (strain TM1040) (Silicibacter sp.).